Here is a 551-residue protein sequence, read N- to C-terminus: Protein GPR107 (551 aa).

The signal sequence occupies residues 1–33 (MAVPVPLGRFGSFCLRLLRLLALLELLVHPVLG). At 40-262 (LKDDVRHKVH…YLSAGEIPLP (223 aa)) the chain is on the extracellular side. 2 N-linked (GlcNAc...) asparagine glycosylation sites follow: Asn-64 and Asn-209. An intrachain disulfide couples Cys-106 to Cys-226. A helical transmembrane segment spans residues 263–283 (KLYVSMALFFFLSGTIWIHIL). Topologically, residues 284 to 292 (RKRRNDVFK) are cytoplasmic. The helical transmembrane segment at 293-313 (IHWLMAALPFTKSLSLVFHAI) threads the bilayer. The Extracellular portion of the chain corresponds to 314 to 336 (DYHYISSQGFPIEGWAVVYYITH). Residues 337 to 357 (LLKGALLFITIALIGTGWAFI) traverse the membrane as a helical segment. Topologically, residues 358–367 (KHILSDKDKK) are cytoplasmic. A helical transmembrane segment spans residues 368–388 (IFMIVIPLQVLANVAYIIIES). Residues 389-401 (TEEGTTEYGLWKD) lie on the Extracellular side of the membrane. The chain crosses the membrane as a helical span at residues 402–422 (SLFLVDLLCCGAILFPVVWSI). Residues 423-449 (RHLQEASATDGKAAINLAKLRLFRHYY) lie on the Cytoplasmic side of the membrane. The chain crosses the membrane as a helical span at residues 450 to 470 (VLIVCYIYFTRIIAFLLKFAV). The Extracellular portion of the chain corresponds to 471–475 (PFQWK). Residues 476 to 495 (WLYQLLDETATLVFFVLTGY) traverse the membrane as a helical segment. Topologically, residues 496 to 551 (KFRPASDNPYLQLSQEDDDLEMESVVTTSGVMENMKKVKKVSNGAVEPQGSWEGTA) are cytoplasmic. Ser-537 bears the Phosphoserine mark.

Belongs to the LU7TM family. In terms of processing, cleaved by FURIN to yield two fragments that remain associated via a disulfide bond.

Its subcellular location is the cell membrane. It localises to the golgi apparatus. The protein localises to the trans-Golgi network membrane. Its function is as follows. Has been proposed to act as a receptor for neuronostatin, a peptide derived from the somatostatin/SST precursor. Involved in blood sugar regulation through the induction of glucagon in response to low glucose. The protein is Protein GPR107 (Gpr107) of Mus musculus (Mouse).